A 126-amino-acid polypeptide reads, in one-letter code: MKHLGRHVLAEICGCDFDILNDIEKVEEIMVNAALEAGAEVRECVFHKFSPQGVSGVVVISESHLAIHTWPELGYAAVDVFTCGDKVNPWDACNYLSERFSAKHMTAREMKRGIIPETYLKEVANL.

Serine 63 acts as the Schiff-base intermediate with substrate; via pyruvic acid in catalysis. Serine 63 carries the pyruvic acid (Ser); by autocatalysis modification. The active-site Proton acceptor; for processing activity is histidine 68. Cysteine 83 (proton donor; for catalytic activity) is an active-site residue.

This sequence belongs to the prokaryotic AdoMetDC family. Type 1 subfamily. In terms of assembly, heterotetramer of two alpha and two beta chains arranged as a dimer of alpha/beta heterodimers. It depends on pyruvate as a cofactor. In terms of processing, is synthesized initially as an inactive proenzyme. Formation of the active enzyme involves a self-maturation process in which the active site pyruvoyl group is generated from an internal serine residue via an autocatalytic post-translational modification. Two non-identical subunits are generated from the proenzyme in this reaction, and the pyruvate is formed at the N-terminus of the alpha chain, which is derived from the carboxyl end of the proenzyme. The post-translation cleavage follows an unusual pathway, termed non-hydrolytic serinolysis, in which the side chain hydroxyl group of the serine supplies its oxygen atom to form the C-terminus of the beta chain, while the remainder of the serine residue undergoes an oxidative deamination to produce ammonia and the pyruvoyl group blocking the N-terminus of the alpha chain.

The enzyme catalyses S-adenosyl-L-methionine + H(+) = S-adenosyl 3-(methylsulfanyl)propylamine + CO2. The protein operates within amine and polyamine biosynthesis; S-adenosylmethioninamine biosynthesis; S-adenosylmethioninamine from S-adenosyl-L-methionine: step 1/1. In terms of biological role, catalyzes the decarboxylation of S-adenosylmethionine to S-adenosylmethioninamine (dcAdoMet), the propylamine donor required for the synthesis of the polyamines spermine and spermidine from the diamine putrescine. The protein is S-adenosylmethionine decarboxylase proenzyme of Pelotomaculum thermopropionicum (strain DSM 13744 / JCM 10971 / SI).